The following is a 548-amino-acid chain: Glucose-6-phosphate isomerase 1 (548 aa).

Catalysis depends on Glu-353, which acts as the Proton donor. Active-site residues include His-384 and Lys-495.

Belongs to the GPI family.

Its subcellular location is the cytoplasm. It catalyses the reaction alpha-D-glucose 6-phosphate = beta-D-fructose 6-phosphate. The protein operates within carbohydrate biosynthesis; gluconeogenesis. It participates in carbohydrate degradation; glycolysis; D-glyceraldehyde 3-phosphate and glycerone phosphate from D-glucose: step 2/4. Catalyzes the reversible isomerization of glucose-6-phosphate to fructose-6-phosphate. The protein is Glucose-6-phosphate isomerase 1 of Chromohalobacter salexigens (strain ATCC BAA-138 / DSM 3043 / CIP 106854 / NCIMB 13768 / 1H11).